Consider the following 64-residue polypeptide: Small ribosomal subunit protein bS21 (64 aa).

The segment at glutamate 39–phenylalanine 64 is disordered. Positions valine 43–phenylalanine 64 are enriched in basic residues.

The protein belongs to the bacterial ribosomal protein bS21 family.

This chain is Small ribosomal subunit protein bS21 (rpsU), found in Myxococcus xanthus.